The following is a 547-amino-acid chain: (E)-beta-caryophyllene synthase (547 aa).

2 residues coordinate Mg(2+): aspartate 302 and aspartate 306. Substrate contacts are provided by aspartate 302, aspartate 306, arginine 443, and asparagine 446. The DDXXD motif signature appears at 302 to 306 (DDLYD). The Mg(2+) site is built by asparagine 446 and glutamate 454.

The protein belongs to the terpene synthase family. Monomer. The cofactor is Mg(2+). Mn(2+) is required as a cofactor.

The protein resides in the cytoplasm. The enzyme catalyses (2E,6E)-farnesyl diphosphate = (-)-(E)-beta-caryophyllene + diphosphate. It participates in secondary metabolite biosynthesis; terpenoid biosynthesis. In terms of biological role, component of the volatile terpenes biosynthesis pathways. Sesquiterpene synthase that converts farnesyl diphosphate to (E)-beta-caryophyllene. Involved in indirect defense by producing volatile signals attracting natural enemies of herbivores. The sequence is that of (E)-beta-caryophyllene synthase from Zea mays (Maize).